An 896-amino-acid chain; its full sequence is DNA mismatch repair protein MutS (896 aa).

Position 599–606 (599–606 (GPNMAGKS)) interacts with ATP.

The protein belongs to the DNA mismatch repair MutS family.

This protein is involved in the repair of mismatches in DNA. It is possible that it carries out the mismatch recognition step. This protein has a weak ATPase activity. In Geobacillus kaustophilus (strain HTA426), this protein is DNA mismatch repair protein MutS.